A 136-amino-acid chain; its full sequence is Large ribosomal subunit protein uL16 (136 aa).

Belongs to the universal ribosomal protein uL16 family. In terms of assembly, part of the 50S ribosomal subunit.

Its function is as follows. Binds 23S rRNA and is also seen to make contacts with the A and possibly P site tRNAs. The chain is Large ribosomal subunit protein uL16 from Shewanella halifaxensis (strain HAW-EB4).